A 201-amino-acid polypeptide reads, in one-letter code: Small ribosomal subunit protein uS4 (201 aa).

Residues Ser91 to Val157 enclose the S4 RNA-binding domain.

The protein belongs to the universal ribosomal protein uS4 family. Part of the 30S ribosomal subunit. Contacts protein S5. The interaction surface between S4 and S5 is involved in control of translational fidelity.

In terms of biological role, one of the primary rRNA binding proteins, it binds directly to 16S rRNA where it nucleates assembly of the body of the 30S subunit. Functionally, with S5 and S12 plays an important role in translational accuracy. This Mycobacterium leprae (strain Br4923) protein is Small ribosomal subunit protein uS4.